A 226-amino-acid chain; its full sequence is uncharacterized protein (226 aa).

This is an uncharacterized protein from Caenorhabditis elegans.